The sequence spans 905 residues: Toll-like receptor 3 (905 aa).

A signal peptide spans 1–25; that stretch reads MKGCSSYLMYSFGGLLSLWILLVSS. In terms of domain architecture, LRRNT spans 26–52; that stretch reads TNQCTVRYNVADCSHLKLTHIPDDLPS. Topologically, residues 26–705 are lumenal; it reads TNQCTVRYNV…SCKDSAPFEL (680 aa). The cysteines at positions 29 and 38 are disulfide-linked. N-linked (GlcNAc...) asparagine glycans are attached at residues N53, N58, and N71. LRR repeat units lie at residues 53–74, 77–98, 101–122, 125–146, 149–170, and 173–196; these read NITV…NFTR, QLAI…LCQI, LLKV…TFVF, NLTE…PFKN, NLIK…TGVQ, and NLQE…EFLG. C96 and C123 are oxidised to a cystine. N-linked (GlcNAc...) asparagine glycosylation occurs at N125. The N-linked (GlcNAc...) asparagine glycan is linked to N197. The stretch at 199 to 220 is one LRR 7 repeat; it reads SLRKLDLSSNPLKEFSPGCFQT. Residues N248, N253, N276, and N292 are each glycosylated (N-linked (GlcNAc...) asparagine). 15 LRR repeats span residues 250–271, 276–297, 300–321, 324–345, 357–378, 381–401, 409–430, 433–454, 458–479, 482–502, 508–529, 532–553, 564–585, 588–609, and 612–633; these read SIQN…TFSG, NLTQ…SFSY, SLRY…SFYG, NLRY…ASHP, YLEY…TFTG, SLKY…TNET, PLLT…TFSW, QLRI…QEWR, NIFE…SFAL, SLQR…SPSP, NLTI…LLEG, NLEI…ANPG, HLHI…VFKN, ELKS…IFDD, and SLRS…VFGP. Residues N399, N414, and N425 are each glycosylated (N-linked (GlcNAc...) asparagine). N508 is a glycosylation site (N-linked (GlcNAc...) asparagine). Positions 646–699 constitute an LRRCT domain; sequence NPFDCTCESISWFVNWINQTHTNISELSTHYLCNTPHHYYGFPLKLFDTSSCKD. 2 disulfides stabilise this stretch: C650–C678 and C652–C697. N-linked (GlcNAc...) asparagine glycans are attached at residues N663 and N668. The helical transmembrane segment at 706 to 726 threads the bilayer; it reads LFIISTSMLLVFILVVLLIHI. Topologically, residues 727–905 are cytoplasmic; the sequence is EGWRISFYWN…VALGSRNSAH (179 aa). The TIR domain maps to 755–898; sequence FEYTAYIIHA…AFHHKLQVAL (144 aa). Position 760 is a phosphotyrosine (Y760). Glycyl lysine isopeptide (Lys-Gly) (interchain with G-Cter in ubiquitin) cross-links involve residues K766, K813, and K832. At Y859 the chain carries Phosphotyrosine.

This sequence belongs to the Toll-like receptor family. Monomer and homodimer; dimerization is triggered by ligand-binding, the signaling unit is composed of one ds-RNA of around 40 bp and two TLR3 molecules, and lateral clustering of signaling units along the length of the ds-RNA ligand is required for TLR3 signal transduction. Interacts (via transmembrane domain) with UNC93B1; the interaction is required for transport from the ER to the endosomes. Interacts with SRC; upon binding of double-stranded RNA. Interacts with TICAM1 (via the TIR domain) in response to poly(I:C) and this interaction is enhanced in the presence of WDFY1. The tyrosine-phosphorylated form (via TIR domain) interacts with WDFY1 (via WD repeat 2) in response to poly(I:C). Ubiquitinated by RNF170 at Lys-766 via 'Lys-48'-linked ubiquitin chains; leading to TLR3 proteasomal degradation. TLR3 signaling requires a proteolytic cleavage mediated by cathepsins CTSB and CTSH, the cleavage occurs between amino acids 252 and 346. The cleaved form of TLR3 is the predominant form found in endosomes. In terms of processing, ubiquitinated by TRIM3; leading to recognition and sorting of polyubiquitinated TLR3 by the ESCRT complexes. Ubiquitinated by ZNRF1 via 'Lys-63'-linked ubiquitin chains; leading to TLR3 lysosomal trafficking and degradation. Highly expressed in lung. After intraperitoneal injection of lipopolysaccharide, highly expressed in brain, heart, kidney, liver, lung and spleen.

It is found in the endoplasmic reticulum membrane. Its subcellular location is the endosome membrane. The protein localises to the early endosome. Its function is as follows. Key component of innate and adaptive immunity. TLRs (Toll-like receptors) control host immune response against pathogens through recognition of molecular patterns specific to microorganisms. TLR3 is a nucleotide-sensing TLR which is activated by double-stranded RNA, a sign of viral infection. Acts via the adapter TRIF/TICAM1, leading to NF-kappa-B activation, IRF3 nuclear translocation, cytokine secretion and the inflammatory response. The sequence is that of Toll-like receptor 3 from Mus musculus (Mouse).